The sequence spans 331 residues: Anthranilate phosphoribosyltransferase (331 aa).

Residues Gly-79, 82-83 (GD), Ser-87, 89-92 (NIST), 107-115 (KHCNSSISG), and Ser-119 contribute to the 5-phospho-alpha-D-ribose 1-diphosphate site. Anthranilate is bound at residue Gly-79. Mg(2+) is bound at residue Ser-91. Asn-110 contacts anthranilate. Arg-165 serves as a coordination point for anthranilate. Residues Asp-223 and Glu-224 each contribute to the Mg(2+) site.

The protein belongs to the anthranilate phosphoribosyltransferase family. As to quaternary structure, homodimer. Mg(2+) serves as cofactor.

The catalysed reaction is N-(5-phospho-beta-D-ribosyl)anthranilate + diphosphate = 5-phospho-alpha-D-ribose 1-diphosphate + anthranilate. The protein operates within amino-acid biosynthesis; L-tryptophan biosynthesis; L-tryptophan from chorismate: step 2/5. In terms of biological role, catalyzes the transfer of the phosphoribosyl group of 5-phosphorylribose-1-pyrophosphate (PRPP) to anthranilate to yield N-(5'-phosphoribosyl)-anthranilate (PRA). The chain is Anthranilate phosphoribosyltransferase from Buchnera aphidicola subsp. Melaphis rhois.